Reading from the N-terminus, the 100-residue chain is Large ribosomal subunit protein uL23 (100 aa).

Belongs to the universal ribosomal protein uL23 family. In terms of assembly, part of the 50S ribosomal subunit. Contacts protein L29, and trigger factor when it is bound to the ribosome.

Functionally, one of the early assembly proteins it binds 23S rRNA. One of the proteins that surrounds the polypeptide exit tunnel on the outside of the ribosome. Forms the main docking site for trigger factor binding to the ribosome. This chain is Large ribosomal subunit protein uL23, found in Shewanella piezotolerans (strain WP3 / JCM 13877).